The chain runs to 194 residues: Fibroblast growth factor 7 (194 aa).

Residues 1–31 (MHKWILTWILPTLLYRSCFHIICLVGTISLA) form the signal peptide. N-linked (GlcNAc...) asparagine glycosylation occurs at Asn45.

It belongs to the heparin-binding growth factors family. Interacts with FGFBP1. Interacts with FGFR2. Affinity between fibroblast growth factors (FGFs) and their receptors is increased by heparan sulfate glycosaminoglycans that function as coreceptors. Epithelial cell.

It localises to the secreted. Functionally, plays an important role in the regulation of embryonic development, cell proliferation and cell differentiation. Required for normal branching morphogenesis. Growth factor active on keratinocytes. Possible major paracrine effector of normal epithelial cell proliferation. The polypeptide is Fibroblast growth factor 7 (FGF7) (Homo sapiens (Human)).